A 202-amino-acid polypeptide reads, in one-letter code: NADH-quinone oxidoreductase subunit C (202 aa).

The protein belongs to the complex I 30 kDa subunit family. In terms of assembly, NDH-1 is composed of 14 different subunits. Subunits NuoB, C, D, E, F, and G constitute the peripheral sector of the complex.

It is found in the cell inner membrane. It carries out the reaction a quinone + NADH + 5 H(+)(in) = a quinol + NAD(+) + 4 H(+)(out). Its function is as follows. NDH-1 shuttles electrons from NADH, via FMN and iron-sulfur (Fe-S) centers, to quinones in the respiratory chain. The immediate electron acceptor for the enzyme in this species is believed to be ubiquinone. Couples the redox reaction to proton translocation (for every two electrons transferred, four hydrogen ions are translocated across the cytoplasmic membrane), and thus conserves the redox energy in a proton gradient. In Acidovorax sp. (strain JS42), this protein is NADH-quinone oxidoreductase subunit C.